A 512-amino-acid polypeptide reads, in one-letter code: ATP synthase subunit alpha (512 aa).

Position 169-176 (169-176 (GDRKTGKT)) interacts with ATP.

It belongs to the ATPase alpha/beta chains family. In terms of assembly, F-type ATPases have 2 components, CF(1) - the catalytic core - and CF(0) - the membrane proton channel. CF(1) has five subunits: alpha(3), beta(3), gamma(1), delta(1), epsilon(1). CF(0) has three main subunits: a(1), b(2) and c(9-12). The alpha and beta chains form an alternating ring which encloses part of the gamma chain. CF(1) is attached to CF(0) by a central stalk formed by the gamma and epsilon chains, while a peripheral stalk is formed by the delta and b chains.

It localises to the cell membrane. It carries out the reaction ATP + H2O + 4 H(+)(in) = ADP + phosphate + 5 H(+)(out). Its function is as follows. Produces ATP from ADP in the presence of a proton gradient across the membrane. The alpha chain is a regulatory subunit. This Limosilactobacillus fermentum (strain NBRC 3956 / LMG 18251) (Lactobacillus fermentum) protein is ATP synthase subunit alpha.